A 419-amino-acid chain; its full sequence is D(4) dopamine receptor (419 aa).

Residues methionine 1–glycine 29 lie on the Extracellular side of the membrane. Residue asparagine 3 is glycosylated (N-linked (GlcNAc...) asparagine). A helical membrane pass occupies residues leucine 30–alanine 50. Topologically, residues glycine 51 to serine 71 are cytoplasmic. The helical transmembrane segment at phenylalanine 72–valine 92 threads the bilayer. Aspartate 80 contributes to the Na(+) binding site. The Extracellular segment spans residues tyrosine 93–alanine 110. Cysteine 108 and cysteine 185 are oxidised to a cystine. Residues leucine 111 to valine 131 traverse the membrane as a helical segment. (2R,3R)-nemonapride is bound at residue aspartate 115. Na(+) is bound at residue serine 122. The Cytoplasmic segment spans residues aspartate 132 to glutamine 152. The chain crosses the membrane as a helical span at residues leucine 153 to glycine 173. At leucine 174–tyrosine 192 the chain is on the extracellular side. A helical transmembrane segment spans residues valine 193–tryptophan 213. Serine 196 lines the (2R,3R)-nemonapride pocket. The Cytoplasmic portion of the chain corresponds to alanine 214–arginine 346. The segment at leucine 230–proline 264 is disordered. A compositionally biased stretch (pro residues) spans proline 238–proline 254. Residues proline 249 to proline 264 form a 1; approximate repeat. Residues proline 249–proline 312 are 4 X 16 AA approximate tandem repeats of [PA]-A-P-G-L-P-[PQR]-[DG]-P-C-G-P-D-C-A-P. Repeat copies occupy residues proline 265 to proline 280 and alanine 281 to proline 296. The 4; approximate repeat unit spans residues proline 297–proline 312. Residues arginine 317–lysine 336 are disordered. Residues valine 347–isoleucine 367 form a helical membrane-spanning segment. The Extracellular segment spans residues threonine 368–valine 382. A disulfide bridge connects residues cysteine 372 and cysteine 375. Residues serine 383 to phenylalanine 403 traverse the membrane as a helical segment. Residues asparagine 404 to cysteine 419 lie on the Cytoplasmic side of the membrane. Cysteine 419 carries S-palmitoyl cysteine lipidation.

Belongs to the G-protein coupled receptor 1 family. In terms of assembly, forms homo- and heterooligomers with DRD2. D4.7 allele exhibits higher affinity for homodimers compared to DRD2 heterodimers, while alleles D42. and 4.4 have similar affinities for both. The interaction with DRD2 may modulate agonist-induced downstream signaling. Interacts with CLIC6. Interacts with GPRASP1. May interact with ADORA2A. Interacts with KLHL12. Polyubiquitinated by the BCR(KLHL12) E3 ubiquitin ligase complex: polyubiquitination does not lead to degradation of DRD4 protein. Post-translationally, palmitoylated. Palmitoylation of the C-terminal Cys is important for normal expression at the cell membrane. As to expression, highly expressed in retina. Detected at much lower levels in brain, in amygdala, thalamus, hypothalamus, cerebellum and pituitary.

It is found in the cell membrane. Its activity is regulated as follows. Signaling in response to agonists such as dopamine, epinephrine and norepinephrine is modulated by Na(+); lower Na(+) levels result in higher receptor activity (in vitro). Functionally, dopamine receptor responsible for neuronal signaling in the mesolimbic system of the brain, an area of the brain that regulates emotion and complex behavior. Activated by dopamine, but also by epinephrine and norepinephrine, and by numerous synthetic agonists and drugs. Agonist binding triggers signaling via G proteins that inhibit adenylyl cyclase. Modulates the circadian rhythm of contrast sensitivity by regulating the rhythmic expression of NPAS2 in the retinal ganglion cells. The sequence is that of D(4) dopamine receptor (DRD4) from Homo sapiens (Human).